Reading from the N-terminus, the 544-residue chain is Chaperonin GroEL 2 (544 aa).

ATP contacts are provided by residues 30-33 (TLGP), Lys-51, 87-91 (DGTTT), Gly-415, and Asp-496.

Belongs to the chaperonin (HSP60) family. In terms of assembly, forms a cylinder of 14 subunits composed of two heptameric rings stacked back-to-back. Interacts with the co-chaperonin GroES.

The protein resides in the cytoplasm. It carries out the reaction ATP + H2O + a folded polypeptide = ADP + phosphate + an unfolded polypeptide.. In terms of biological role, together with its co-chaperonin GroES, plays an essential role in assisting protein folding. The GroEL-GroES system forms a nano-cage that allows encapsulation of the non-native substrate proteins and provides a physical environment optimized to promote and accelerate protein folding. The chain is Chaperonin GroEL 2 from Rhizobium johnstonii (strain DSM 114642 / LMG 32736 / 3841) (Rhizobium leguminosarum bv. viciae).